An 87-amino-acid chain; its full sequence is Putative BTB/POZ domain-containing protein At3g29740 (87 aa).

In terms of domain architecture, BTB spans 24–87 (VDVRLKAGDS…KHTELVALVE (64 aa)).

It participates in protein modification; protein ubiquitination. May act as a substrate-specific adapter of an E3 ubiquitin-protein ligase complex (CUL3-RBX1-BTB) which mediates the ubiquitination and subsequent proteasomal degradation of target proteins. The polypeptide is Putative BTB/POZ domain-containing protein At3g29740 (Arabidopsis thaliana (Mouse-ear cress)).